The primary structure comprises 162 residues: MKGRAWKFGDDVDTDAVIPGRYLIFNTPGELAKYTFEGVRPDFAKNVHENDIVVAGSNFGCGSSREHAPLALKGSKVSCVIAKSFARIFFRNAINIGVPVLECPDTDKIDDGDELEVDISTGVIQNRTKGETYQATPLPDFVREIVDEGGLIEYARKLVSER.

Belongs to the LeuD family. LeuD type 2 subfamily. In terms of assembly, heterodimer of LeuC and LeuD.

It catalyses the reaction (2R,3S)-3-isopropylmalate = (2S)-2-isopropylmalate. The protein operates within amino-acid biosynthesis; L-leucine biosynthesis; L-leucine from 3-methyl-2-oxobutanoate: step 2/4. Catalyzes the isomerization between 2-isopropylmalate and 3-isopropylmalate, via the formation of 2-isopropylmaleate. This is 3-isopropylmalate dehydratase small subunit (leuD) from Methanosarcina mazei (strain ATCC BAA-159 / DSM 3647 / Goe1 / Go1 / JCM 11833 / OCM 88) (Methanosarcina frisia).